The primary structure comprises 310 residues: Protoheme IX farnesyltransferase 2 (310 aa).

Helical transmembrane passes span 25-45 (PGII…AAKG), 49-69 (LVLM…GCAI), 98-118 (HVLL…ALFT), 121-141 (LALL…SLYM), 145-165 (SVYG…VGYC), 176-196 (VILL…IAIF), 222-242 (IVLY…AGYT), 245-265 (AFMA…LKGY), and 277-297 (QVFG…ALDF).

This sequence belongs to the UbiA prenyltransferase family. Protoheme IX farnesyltransferase subfamily.

It localises to the cell inner membrane. It catalyses the reaction heme b + (2E,6E)-farnesyl diphosphate + H2O = Fe(II)-heme o + diphosphate. It participates in porphyrin-containing compound metabolism; heme O biosynthesis; heme O from protoheme: step 1/1. In terms of biological role, converts heme B (protoheme IX) to heme O by substitution of the vinyl group on carbon 2 of heme B porphyrin ring with a hydroxyethyl farnesyl side group. This Shewanella sp. (strain ANA-3) protein is Protoheme IX farnesyltransferase 2.